A 582-amino-acid polypeptide reads, in one-letter code: MSSSLGKEKDSKEKDPKVPSAKEREKESKASGGFGKESKEKEPKAKGKDAKDGKKESSAAQPGVAFSVDNTIKRPNPAPGTRKKSSNAEVIKELNKCREENSMRLDLSKRSIHILPPSVKELTQLTELYLYSNKLQSLPAEVGCLVNLMTLALSENSLTSLPDSLDNLKKLRMLDLRHNKLREIPSVVYRLDSLTTLYLRFNRITTVEKDIKNLPKLSMLSIRENKIKQLPAEIGELCNLITLDVAHNQLEHLPKEIGNCTQITNLDLQHNDLLDLPDTIGNLSSLNRLGLRYNRLSAIPRSLAKCSALEELNLENNNISTLPESLLSSLVKLNSLTLARNCFQLYPVGGPSQFSTIYSLNMEHNRINKIPFGIFSRAKVLSKLNMKDNQLTSLPLDFGTWTSMVELNLATNQLTKIPEDVSGLVSLEVLILSNNLLKKLPHGLGNLRKLRELDLEENKLESLPNEIAYLKDLQKLVLTNNQLSTLPRGIGHLTNLTHLGLGENLLTHLPEEIGTLENLEELYLNDNPNLHSLPFELALCSKLSIMSIENCPLSHLPPQIVAGGPSFIIQFLKMQGPYRAMV.

Composition is skewed to basic and acidic residues over residues 1-29 (MSSS…KESK) and 36-57 (KESK…KKES). The tract at residues 1–88 (MSSSLGKEKD…PGTRKKSSNA (88 aa)) is disordered. Positions 63 to 66 (GVAF) match the RVxF motif; important for interaction with PP1c motif. LRR repeat units follow at residues 101-122 (NSMR…VKEL), 124-145 (QLTE…VGCL), 147-169 (NLMT…DNLK), 170-191 (KLRM…VYRL), 193-215 (SLTT…KNLP), 216-237 (KLSM…IGEL), 239-260 (NLIT…IGNC), 262-283 (QITN…IGNL), 285-307 (SLNR…AKCS), 308-329 (ALEE…LLSS), 332-353 (KLNS…GPSQ), 356-377 (TIYS…IFSR), 380-400 (VLSK…DFGT), 403-424 (SMVE…VSGL), 426-448 (SLEV…GNLR), 449-470 (KLRE…IAYL), 472-494 (DLQK…GHLT), 495-516 (NLTH…IGTL), 518-540 (NLEE…LALC), and 542-563 (KLSI…IVAG).

Belongs to the SHOC2 family. Component of the SHOC2-MRAS-PP1c (SMP) complex consisting of SHOC2, GTP-bound M-Ras/MRAS and the catalytic subunit of protein phosphatase 1 (either PPP1CA, PPP1CB or PPP1CC). SHOC2 and PP1c preferably bind M-Ras/MRAS, but they also bind K-Ras/KRAS, N-Ras/NRAS and H-Ras/HRAS; these interactions are GTP-dependent and both SHOC2 and PP1c are required to form a stable complex. Interacts with PP1c in the absence of Ras GTPases. Interacts with M-Ras/MRAS and RAF1. Interacts with ERBIN; disrupts the interaction with RAF1 and Ras, preventing the activation of the Ras signaling pathway. Interacts with LZTR1.

Its subcellular location is the cytoplasm. It localises to the nucleus. Core component of the SHOC2-MRAS-PP1c (SMP) holophosphatase complex that regulates activation of the MAPK pathway. Acts as a scaffolding protein in the SMP complex. The SMP complex specifically dephosphorylates the inhibitory phosphorylation at 'Ser-259' of RAF1 kinase, 'Ser-365' of BRAF kinase and 'Ser-214' of ARAF kinase, stimulating their kinase activities. The SMP complex enhances the dephosphorylation activity and substrate specificity of PP1c. This chain is Leucine-rich repeat protein SHOC-2 (Shoc2), found in Mus musculus (Mouse).